Reading from the N-terminus, the 252-residue chain is Imidazole glycerol phosphate synthase subunit HisF (252 aa).

Residues Asp-11 and Asp-130 contribute to the active site.

The protein belongs to the HisA/HisF family. Heterodimer of HisH and HisF.

It is found in the cytoplasm. It carries out the reaction 5-[(5-phospho-1-deoxy-D-ribulos-1-ylimino)methylamino]-1-(5-phospho-beta-D-ribosyl)imidazole-4-carboxamide + L-glutamine = D-erythro-1-(imidazol-4-yl)glycerol 3-phosphate + 5-amino-1-(5-phospho-beta-D-ribosyl)imidazole-4-carboxamide + L-glutamate + H(+). It functions in the pathway amino-acid biosynthesis; L-histidine biosynthesis; L-histidine from 5-phospho-alpha-D-ribose 1-diphosphate: step 5/9. Its function is as follows. IGPS catalyzes the conversion of PRFAR and glutamine to IGP, AICAR and glutamate. The HisF subunit catalyzes the cyclization activity that produces IGP and AICAR from PRFAR using the ammonia provided by the HisH subunit. The protein is Imidazole glycerol phosphate synthase subunit HisF of Acinetobacter baumannii (strain AB307-0294).